A 210-amino-acid polypeptide reads, in one-letter code: Guanylate kinase (210 aa).

One can recognise a Guanylate kinase-like domain in the interval 6–184 (GNIYIVVAPS…ARLDLISIVR (179 aa)). 13–20 (APSGAGKT) is a binding site for ATP.

It belongs to the guanylate kinase family.

It is found in the cytoplasm. The enzyme catalyses GMP + ATP = GDP + ADP. Functionally, essential for recycling GMP and indirectly, cGMP. This chain is Guanylate kinase, found in Chromobacterium violaceum (strain ATCC 12472 / DSM 30191 / JCM 1249 / CCUG 213 / NBRC 12614 / NCIMB 9131 / NCTC 9757 / MK).